We begin with the raw amino-acid sequence, 185 residues long: ATP synthase subunit b, cyanelle (185 aa).

A helical transmembrane segment spans residues 36-58 (LINLLVIFFLLIYQGRPFFTALL).

Belongs to the ATPase B chain family. In terms of assembly, F-type ATPases have 2 components, F(1) - the catalytic core - and F(0) - the membrane proton channel. F(1) has five subunits: alpha(3), beta(3), gamma(1), delta(1), epsilon(1). F(0) has four main subunits: a(1), b(1), b'(1) and c(10-14). The alpha and beta chains form an alternating ring which encloses part of the gamma chain. F(1) is attached to F(0) by a central stalk formed by the gamma and epsilon chains, while a peripheral stalk is formed by the delta, b and b' chains.

The protein localises to the plastid. Its subcellular location is the cyanelle thylakoid membrane. In terms of biological role, f(1)F(0) ATP synthase produces ATP from ADP in the presence of a proton or sodium gradient. F-type ATPases consist of two structural domains, F(1) containing the extramembraneous catalytic core and F(0) containing the membrane proton channel, linked together by a central stalk and a peripheral stalk. During catalysis, ATP synthesis in the catalytic domain of F(1) is coupled via a rotary mechanism of the central stalk subunits to proton translocation. Its function is as follows. Component of the F(0) channel, it forms part of the peripheral stalk, linking F(1) to F(0). This Cyanophora paradoxa protein is ATP synthase subunit b, cyanelle.